Here is a 361-residue protein sequence, read N- to C-terminus: Tetraacyldisaccharide 4'-kinase (361 aa).

Position 49 to 56 (Thr-49 to Thr-56) interacts with ATP.

It belongs to the LpxK family.

The catalysed reaction is a lipid A disaccharide + ATP = a lipid IVA + ADP + H(+). Its pathway is glycolipid biosynthesis; lipid IV(A) biosynthesis; lipid IV(A) from (3R)-3-hydroxytetradecanoyl-[acyl-carrier-protein] and UDP-N-acetyl-alpha-D-glucosamine: step 6/6. In terms of biological role, transfers the gamma-phosphate of ATP to the 4'-position of a tetraacyldisaccharide 1-phosphate intermediate (termed DS-1-P) to form tetraacyldisaccharide 1,4'-bis-phosphate (lipid IVA). This is Tetraacyldisaccharide 4'-kinase from Chlorobaculum parvum (strain DSM 263 / NCIMB 8327) (Chlorobium vibrioforme subsp. thiosulfatophilum).